A 127-amino-acid chain; its full sequence is S1-like domain-containing protein C146.08c (127 aa).

The 77-residue stretch at 10–86 folds into the S1-like domain; that stretch reads SFDPPARLEK…NKIDGTILYV (77 aa). The tract at residues 107–127 is disordered; it reads ESLNQNDSEESSSSEEEYDSD. Residues 113 to 127 are compositionally biased toward acidic residues; it reads DSEESSSSEEEYDSD. Tyr-124 is modified (phosphotyrosine). A Phosphoserine modification is found at Ser-126.

This sequence belongs to the EIF1AD family.

The protein resides in the cytoplasm. It is found in the nucleus. This is S1-like domain-containing protein C146.08c from Schizosaccharomyces pombe (strain 972 / ATCC 24843) (Fission yeast).